Reading from the N-terminus, the 566-residue chain is Putative pentatricopeptide repeat-containing protein At1g28020 (566 aa).

9 PPR repeats span residues 136–171 (GDSVYTSLLNSYARSDKTLCKAEATFQKMRDLGLLL), 172–206 (RPVPYNAMMSLYSALKNREKVEELLLEMKDNDVEA), 207–242 (DNVTVNNVLKLYSAVCDVTEMEKFLNKWEGIHGIKL), 243–273 (EWHTTLDMAKAYLRARSSGKAMKMLRLTEQL), 279–309 (LKSAYDHLMKLYGEAGNREEVLRVWKLYKSK), 314–348 (DNNGYRTVIRSLLKVDDIVGAEEIYKVWESLPLEF), 349–385 (DHRIPTMLASGYRDRGMTEKAEKLMNSKTIKDRRMNK), 468–504 (DYSVYVALLSSYAKSDKNLGNMVDEILREMEENNVDP), and 505–540 (DLITVNHVLKVYAAESKIQAMEMFMRRWGTEDGIKL).

It belongs to the PPR family. P subfamily.

The protein is Putative pentatricopeptide repeat-containing protein At1g28020 of Arabidopsis thaliana (Mouse-ear cress).